Reading from the N-terminus, the 238-residue chain is ATP-dependent dethiobiotin synthetase BioD (238 aa).

12–17 (GVGKTV) is a binding site for ATP. Residue T16 participates in Mg(2+) binding. The active site involves K37. T41 contributes to the substrate binding site. Residues D50, 109–112 (EGAG), 170–171 (GS), and 200–202 (PAG) contribute to the ATP site. Residues D50 and E109 each contribute to the Mg(2+) site.

It belongs to the dethiobiotin synthetase family. Homodimer. Requires Mg(2+) as cofactor.

The protein localises to the cytoplasm. The enzyme catalyses (7R,8S)-7,8-diammoniononanoate + CO2 + ATP = (4R,5S)-dethiobiotin + ADP + phosphate + 3 H(+). It functions in the pathway cofactor biosynthesis; biotin biosynthesis; biotin from 7,8-diaminononanoate: step 1/2. Functionally, catalyzes a mechanistically unusual reaction, the ATP-dependent insertion of CO2 between the N7 and N8 nitrogen atoms of 7,8-diaminopelargonic acid (DAPA, also called 7,8-diammoniononanoate) to form a ureido ring. In Frankia casuarinae (strain DSM 45818 / CECT 9043 / HFP020203 / CcI3), this protein is ATP-dependent dethiobiotin synthetase BioD.